Reading from the N-terminus, the 206-residue chain is Transmembrane emp24 domain-containing protein bai (206 aa).

The signal sequence occupies residues 1-20 (MARAALIVCLLMACAWSSHA). Over 21–172 (VMFKLSPNTQ…RDTNEKTNSR (152 aa)) the chain is Lumenal. One can recognise a GOLD domain in the interval 30 to 140 (QKCLKEDIQA…LKPLEVDLKR (111 aa)). The helical transmembrane segment at 173–193 (VLFFSIFSMCCLLGLATWQVL) threads the bilayer. Residues 194-206 (YLRRYFKAKKLIE) are Cytoplasmic-facing.

Belongs to the EMP24/GP25L family.

Its subcellular location is the membrane. Functionally, eca and bai are essential, though not redundant, for dorsoventral patterning of the embryo. Specifically required during early embryogenesis for the activity of maternal tkv, while the zygotic tkv is not affected. The polypeptide is Transmembrane emp24 domain-containing protein bai (Drosophila erecta (Fruit fly)).